A 305-amino-acid polypeptide reads, in one-letter code: UPF0282 protein Tneu_0934 (305 aa).

Belongs to the UPF0282 family.

The protein is UPF0282 protein Tneu_0934 of Pyrobaculum neutrophilum (strain DSM 2338 / JCM 9278 / NBRC 100436 / V24Sta) (Thermoproteus neutrophilus).